Here is a 733-residue protein sequence, read N- to C-terminus: Neutral ceramidase 3 (733 aa).

The signal sequence occupies residues 1-25; it reads MTRWSMSMHCTLFLLFLLRLTCIFS. The active-site Nucleophile is the S307. N325 is a glycosylation site (N-linked (GlcNAc...) asparagine).

The protein belongs to the neutral ceramidase family.

The protein localises to the secreted. Its subcellular location is the endoplasmic reticulum. It localises to the golgi apparatus. The catalysed reaction is an N-acylsphing-4-enine + H2O = sphing-4-enine + a fatty acid. Its function is as follows. Hydrolyzes the sphingolipid ceramide into sphingosine and free fatty acid. Promotes oxidative stress resistance. The chain is Neutral ceramidase 3 from Arabidopsis thaliana (Mouse-ear cress).